Here is a 465-residue protein sequence, read N- to C-terminus: Cyclin-A1 (465 aa).

The protein belongs to the cyclin family. Cyclin AB subfamily. In terms of assembly, interacts with the CDK2 and the CDC2 protein kinases to form a serine/threonine kinase holoenzyme complex. The cyclin subunit imparts substrate specificity to the complex. Does not bind CDK4 and CDK5 (in vitro). The cyclin A1-CDK2 complex interacts with transcription factor E2F-1 and RB proteins. Found in a complex with CDK2, CABLES1 and CCNE1. Interacts with INCA1. Interacts with KLHDC9. Polyubiquitinated via 'Lys-11'-linked ubiquitin by the anaphase-promoting complex (APC/C), leading to its degradation by the proteasome. Deubiquitinated and stabilized by USP37 enables entry into S phase. Ubiquitinated during the G1 phase by the SCF(FBXO31) complex, leading to its proteasomal degradation. In terms of tissue distribution, very high levels in testis and very low levels in brain. Also found in myeloid leukemia cell lines.

It localises to the nucleus. May be involved in the control of the cell cycle at the G1/S (start) and G2/M (mitosis) transitions. May primarily function in the control of the germline meiotic cell cycle and additionally in the control of mitotic cell cycle in some somatic cells. The chain is Cyclin-A1 (CCNA1) from Homo sapiens (Human).